The primary structure comprises 365 residues: Putative fatty acid elongase 2 (365 aa).

Residues Met-1 to Arg-68 lie on the Lumenal side of the membrane. Residues Asn-17 and Asn-65 are each glycosylated (N-linked (GlcNAc...) asparagine). A helical transmembrane segment spans residues Phe-69–Gly-89. The Cytoplasmic portion of the chain corresponds to Gly-90–Thr-111. Residues Phe-112–Tyr-132 form a helical membrane-spanning segment. The Lumenal portion of the chain corresponds to Lys-133 to Pro-149. The helical transmembrane segment at Leu-150–Phe-170 threads the bilayer. At Leu-171–Gln-179 the chain is on the cytoplasmic side. Residues Phe-180–Val-198 traverse the membrane as a helical segment. Residues Gly-199–Ser-204 lie on the Lumenal side of the membrane. Residues Trp-205 to Val-225 form a helical membrane-spanning segment. The Cytoplasmic portion of the chain corresponds to Ala-226–Gln-241. A helical membrane pass occupies residues Ile-242–Tyr-262. At Arg-263 to Pro-278 the chain is on the lumenal side. The chain crosses the membrane as a helical span at residues Leu-279–Tyr-299. At His-300–Lys-365 the chain is on the cytoplasmic side.

Belongs to the ELO family.

The protein resides in the endoplasmic reticulum membrane. It carries out the reaction a very-long-chain acyl-CoA + malonyl-CoA + H(+) = a very-long-chain 3-oxoacyl-CoA + CO2 + CoA. May be involved in the synthesis of very long chain fatty acids. The sequence is that of Putative fatty acid elongase 2 from Schizosaccharomyces pombe (strain 972 / ATCC 24843) (Fission yeast).